The following is a 488-amino-acid chain: Glutamyl-tRNA(Gln) amidotransferase subunit A (488 aa).

Active-site charge relay system residues include Lys77 and Ser152. Ser176 serves as the catalytic Acyl-ester intermediate.

This sequence belongs to the amidase family. GatA subfamily. As to quaternary structure, heterotrimer of A, B and C subunits.

It carries out the reaction L-glutamyl-tRNA(Gln) + L-glutamine + ATP + H2O = L-glutaminyl-tRNA(Gln) + L-glutamate + ADP + phosphate + H(+). Functionally, allows the formation of correctly charged Gln-tRNA(Gln) through the transamidation of misacylated Glu-tRNA(Gln) in organisms which lack glutaminyl-tRNA synthetase. The reaction takes place in the presence of glutamine and ATP through an activated gamma-phospho-Glu-tRNA(Gln). The polypeptide is Glutamyl-tRNA(Gln) amidotransferase subunit A (Latilactobacillus sakei subsp. sakei (strain 23K) (Lactobacillus sakei subsp. sakei)).